The chain runs to 129 residues: Small ribosomal subunit protein uS12 (129 aa).

Position 89 is a 3-methylthioaspartic acid (Asp89). The interval Arg110–Lys129 is disordered.

The protein belongs to the universal ribosomal protein uS12 family. As to quaternary structure, part of the 30S ribosomal subunit. Contacts proteins S8 and S17. May interact with IF1 in the 30S initiation complex.

With S4 and S5 plays an important role in translational accuracy. Its function is as follows. Interacts with and stabilizes bases of the 16S rRNA that are involved in tRNA selection in the A site and with the mRNA backbone. Located at the interface of the 30S and 50S subunits, it traverses the body of the 30S subunit contacting proteins on the other side and probably holding the rRNA structure together. The combined cluster of proteins S8, S12 and S17 appears to hold together the shoulder and platform of the 30S subunit. The sequence is that of Small ribosomal subunit protein uS12 from Rickettsia bellii (strain OSU 85-389).